A 500-amino-acid chain; its full sequence is Putative antiporter subunit mnhD2 (500 aa).

The next 14 helical transmembrane spans lie at 2–22 (MSNL…ILVF), 32–52 (ILSI…LIYV), 78–98 (LSLL…AYGF), 108–128 (FHLP…FLTS), 130–150 (LFNL…LVTL), 161–181 (IVYV…IGML), 209–229 (ISLV…FMWL), 240–260 (LAAL…IRFF), 273–293 (TLLV…VIAY), 308–328 (IGFI…GAIF), 330–350 (LAND…LVYM), 368–388 (FFGV…PFSG), 403–423 (GNYI…YSLF), and 450–470 (GLLS…PVVL).

Belongs to the CPA3 antiporters (TC 2.A.63) subunit D family. May form a heterooligomeric complex that consists of seven subunits: mnhA2, mnhB2, mnhC2, mnhD2, mnhE2, mnhF2 and mnhG2.

It is found in the cell membrane. The protein is Putative antiporter subunit mnhD2 (mnhD2) of Staphylococcus epidermidis (strain ATCC 12228 / FDA PCI 1200).